A 252-amino-acid chain; its full sequence is Geranylgeranylglyceryl phosphate synthase (252 aa).

Residues Asp26 and Ser55 each coordinate Mg(2+). Sn-glycerol 1-phosphate contacts are provided by residues 174-180, 205-206, and 227-228; these read YLEAGSG, GG, and GT.

Belongs to the GGGP/HepGP synthase family. Group II subfamily. Requires Mg(2+) as cofactor.

The protein resides in the cytoplasm. The enzyme catalyses sn-glycerol 1-phosphate + (2E,6E,10E)-geranylgeranyl diphosphate = sn-3-O-(geranylgeranyl)glycerol 1-phosphate + diphosphate. The protein operates within membrane lipid metabolism; glycerophospholipid metabolism. Prenyltransferase that catalyzes the transfer of the geranylgeranyl moiety of geranylgeranyl diphosphate (GGPP) to the C3 hydroxyl of sn-glycerol-1-phosphate (G1P). This reaction is the first ether-bond-formation step in the biosynthesis of archaeal membrane lipids. In Thermococcus gammatolerans (strain DSM 15229 / JCM 11827 / EJ3), this protein is Geranylgeranylglyceryl phosphate synthase.